Consider the following 339-residue polypeptide: N-acetyl-gamma-glutamyl-phosphate reductase (339 aa).

The active site involves Cys-145.

This sequence belongs to the NAGSA dehydrogenase family. Type 1 subfamily.

It is found in the cytoplasm. The catalysed reaction is N-acetyl-L-glutamate 5-semialdehyde + phosphate + NADP(+) = N-acetyl-L-glutamyl 5-phosphate + NADPH + H(+). It functions in the pathway amino-acid biosynthesis; L-arginine biosynthesis; N(2)-acetyl-L-ornithine from L-glutamate: step 3/4. Catalyzes the NADPH-dependent reduction of N-acetyl-5-glutamyl phosphate to yield N-acetyl-L-glutamate 5-semialdehyde. In Thermotoga petrophila (strain ATCC BAA-488 / DSM 13995 / JCM 10881 / RKU-1), this protein is N-acetyl-gamma-glutamyl-phosphate reductase.